A 92-amino-acid polypeptide reads, in one-letter code: Large ribosomal subunit protein bL34m (92 aa).

A mitochondrion-targeting transit peptide spans 1–46; the sequence is MAVLAGSLLGPTSRSAALLGGRWLQPRAWLGFPDAWGLPTPQQARG. Serine 71 carries the post-translational modification Phosphoserine.

The protein belongs to the bacterial ribosomal protein bL34 family. In terms of assembly, component of the mitochondrial large ribosomal subunit (mt-LSU). Mature mammalian 55S mitochondrial ribosomes consist of a small (28S) and a large (39S) subunit. The 28S small subunit contains a 12S ribosomal RNA (12S mt-rRNA) and 30 different proteins. The 39S large subunit contains a 16S rRNA (16S mt-rRNA), a copy of mitochondrial valine transfer RNA (mt-tRNA(Val)), which plays an integral structural role, and 52 different proteins.

It is found in the mitochondrion. In Homo sapiens (Human), this protein is Large ribosomal subunit protein bL34m (MRPL34).